The primary structure comprises 131 residues: RutC family protein YjgH (131 aa).

This sequence belongs to the RutC family.

This Escherichia coli (strain K12) protein is RutC family protein YjgH (yjgH).